The sequence spans 390 residues: MNVKGTPTRTIWPAREGGAVWIIDQTRLPHEFVTQRLNDLGAVAHAIRAMLVRGAPLIGATAAYGVALGMAEDPSDEGLTRACQTLLATRPTAVNLRWAIEAMAESLAAVPPDQRAQAAWAKAGAICDEDVALNEAIGDHGLGIIKDLARTKGVEKGGEGPINILTHCNAGWLATVDWGTALAPLYKAHDAGLPIHVWVDETRPRNQGASLTAWELNSHGVPHTVIADNTGGHLMQHGLVDMVIVGTDRTTATGDVCNKIGTYLKALAAFDNAVPFYVALPGPTIDWTVNDGLREIPIEQRDAAEVTRVWGRTAAGALEWVTITPTGSPAANYAFDVTPARLITGLITERGVCAASAAGLAGLYPERAPAPVPAGSAAGKGAAATADGAL.

Substrate is bound by residues 53 to 55 (RGA), R90, and Q207. The active-site Proton donor is the D248. 258–259 (NK) is a binding site for substrate.

This sequence belongs to the EIF-2B alpha/beta/delta subunits family. MtnA subfamily.

It catalyses the reaction 5-(methylsulfanyl)-alpha-D-ribose 1-phosphate = 5-(methylsulfanyl)-D-ribulose 1-phosphate. The enzyme catalyses 5-deoxy-alpha-D-ribose 1-phosphate = 5-deoxy-D-ribulose 1-phosphate. The protein operates within amino-acid biosynthesis; L-methionine biosynthesis via salvage pathway; L-methionine from S-methyl-5-thio-alpha-D-ribose 1-phosphate: step 1/6. Its function is as follows. Catalyzes the interconversion of methylthioribose-1-phosphate (MTR-1-P) into methylthioribulose-1-phosphate (MTRu-1-P). Also catalyzes the interconversion of 5-deoxyribose 1-phosphate and 5-deoxyribulose 1-phosphate. Part of a bifunctional DHAP-shunt salvage pathway for SAM by-products. The sequence is that of Methylthioribose-1-phosphate isomerase from Rhodospirillum rubrum (strain ATCC 11170 / ATH 1.1.1 / DSM 467 / LMG 4362 / NCIMB 8255 / S1).